A 79-amino-acid chain; its full sequence is Antimicrobial peptide UyCT1 (79 aa).

A signal peptide spans 1–23 (MKTQLAFLAITVILMQLFAQTEA). I37 carries the post-translational modification Isoleucine amide. The propeptide occupies 41–79 (GLRNVDQIADLFDSGLSDADDLFDSGLSDADAKFMKMFM).

Belongs to the non-disulfide-bridged peptide (NDBP) superfamily. Short antimicrobial peptide (group 4) family. Expressed by the venom gland.

Its subcellular location is the secreted. It is found in the target cell membrane. Its function is as follows. Inhibits the growth of Gram-positive (S.aureus, MIC=15 uM) and Gram-negative bacteria (E.coli, MIC=10 uM and P.aeruginosa, MIC=10 uM). It also shows 26% of hemolysis when 15 uM are tested (81% at 50 uM). Inhibits the growth of Gram-negative bacteria (E.coli, MIC=25 uM and P.aeruginosa, MIC=40 uM). It also shows 7% of hemolysis when 50 uM are tested. Does not show activity against the Gram-positive bacteria S.aureus. The sequence is that of Antimicrobial peptide UyCT1 from Urodacus yaschenkoi (Inland robust scorpion).